A 129-amino-acid polypeptide reads, in one-letter code: D-ribose pyranase (129 aa).

Residue H20 is the Proton donor of the active site. Substrate is bound by residues D28, H96, and 118–120; that span reads YAN.

Belongs to the RbsD / FucU family. RbsD subfamily. Homodecamer.

The protein resides in the cytoplasm. It carries out the reaction beta-D-ribopyranose = beta-D-ribofuranose. Its pathway is carbohydrate metabolism; D-ribose degradation; D-ribose 5-phosphate from beta-D-ribopyranose: step 1/2. Its function is as follows. Catalyzes the interconversion of beta-pyran and beta-furan forms of D-ribose. This Halalkalibacterium halodurans (strain ATCC BAA-125 / DSM 18197 / FERM 7344 / JCM 9153 / C-125) (Bacillus halodurans) protein is D-ribose pyranase.